The following is a 226-amino-acid chain: CRISPR-associated protein Cas5 (226 aa).

The protein belongs to the CRISPR-associated protein Cas5 family. Subtype I-A/Apern subfamily. Can form a Cascade complex with Csa5, Cas7, Cas3, Cas3' and Cas8a2.

CRISPR (clustered regularly interspaced short palindromic repeat) is an adaptive immune system that provides protection against mobile genetic elements (viruses, transposable elements and conjugative plasmids). CRISPR clusters contain spacers, sequences complementary to antecedent mobile elements, and target invading nucleic acids. CRISPR clusters are transcribed and processed into CRISPR RNA (crRNA). This chain is CRISPR-associated protein Cas5 (cas5a), found in Thermoproteus tenax (strain ATCC 35583 / DSM 2078 / JCM 9277 / NBRC 100435 / Kra 1).